Reading from the N-terminus, the 282-residue chain is Acetyl-coenzyme A carboxylase carboxyl transferase subunit beta (282 aa).

A CoA carboxyltransferase N-terminal domain is found at 26 to 282 (GLWHQTPTGK…VSKTVKLLVH (257 aa)).

This sequence belongs to the AccD/PCCB family. In terms of assembly, acetyl-CoA carboxylase is a heterohexamer composed of biotin carboxyl carrier protein (AccB), biotin carboxylase (AccC) and two subunits each of ACCase subunit alpha (AccA) and ACCase subunit beta (AccD).

Its subcellular location is the cytoplasm. The catalysed reaction is N(6)-carboxybiotinyl-L-lysyl-[protein] + acetyl-CoA = N(6)-biotinyl-L-lysyl-[protein] + malonyl-CoA. The protein operates within lipid metabolism; malonyl-CoA biosynthesis; malonyl-CoA from acetyl-CoA: step 1/1. Its function is as follows. Component of the acetyl coenzyme A carboxylase (ACC) complex. Biotin carboxylase (BC) catalyzes the carboxylation of biotin on its carrier protein (BCCP) and then the CO(2) group is transferred by the transcarboxylase to acetyl-CoA to form malonyl-CoA. In Flavobacteriaceae bacterium (strain 3519-10), this protein is Acetyl-coenzyme A carboxylase carboxyl transferase subunit beta.